A 232-amino-acid polypeptide reads, in one-letter code: Caffeoyl-CoA O-methyltransferase (232 aa).

Residue K6 coordinates substrate. Residues T48, E70, 72-73 (GV), S78, D96, and A125 contribute to the S-adenosyl-L-methionine site. D148 serves as a coordination point for substrate. D148 is a binding site for a divalent metal cation. D150 contacts S-adenosyl-L-methionine. 2 residues coordinate a divalent metal cation: D174 and N175. N179 provides a ligand contact to substrate.

It belongs to the class I-like SAM-binding methyltransferase superfamily. Cation-dependent O-methyltransferase family. CCoAMT subfamily. It depends on a divalent metal cation as a cofactor.

The catalysed reaction is (E)-caffeoyl-CoA + S-adenosyl-L-methionine = (E)-feruloyl-CoA + S-adenosyl-L-homocysteine + H(+). It participates in aromatic compound metabolism; phenylpropanoid biosynthesis. In terms of biological role, methylates caffeoyl-CoA to feruloyl-CoA and 5-hydroxyferuloyl-CoA to sinapoyl-CoA. Plays a role in the synthesis of feruloylated polysaccharides. Involved in the reinforcement of the plant cell wall. Also involved in the responding to wounding or pathogen challenge by the increased formation of cell wall-bound ferulic acid polymers. The sequence is that of Caffeoyl-CoA O-methyltransferase from Citrus natsudaidai (Natsudaidai orange).